We begin with the raw amino-acid sequence, 718 residues long: F-box/LRR-repeat protein 18 (718 aa).

An F-box domain is found at 25–72; it reads GVHLLGFSDEILLHILSHVPSTDLILNVRRTCRKLAALCLDKSLIHTV. 12 LRR repeats span residues 77 to 103, 104 to 128, 129 to 153, 177 to 201, 324 to 352, 367 to 392, 393 to 422, 468 to 492, 516 to 540, 542 to 567, 572 to 597, and 599 to 623; these read DYQA…SMAG, CYWL…NLSG, CHLT…AIDV, KQTL…LLYF, CTLS…NLSG, EDDI…NLSA, AHHH…SLPV, CPQP…ELIG, AQSV…TLAQ, PSVL…SLAN, GKVV…RLEQ, and YFSA…CLVS.

In terms of assembly, directly interacts with SKP1 and CUL1.

In terms of biological role, substrate-recognition component of the SCF (SKP1-CUL1-F-box protein)-type E3 ubiquitin ligase complex. The polypeptide is F-box/LRR-repeat protein 18 (FBXL18) (Homo sapiens (Human)).